The chain runs to 489 residues: Putative BTB/POZ domain-containing protein R773 (489 aa).

The 71-residue stretch at serine 3 to lysine 73 folds into the BTB domain.

This sequence belongs to the mimivirus BTB/WD family.

The chain is Putative BTB/POZ domain-containing protein R773 from Acanthamoeba polyphaga (Amoeba).